Here is a 353-residue protein sequence, read N- to C-terminus: Guanine nucleotide-binding protein subunit beta-5 (353 aa).

7 WD repeats span residues 61-100 (GHGNKVLCMDWCKDKRRIVSSSQDGKVIVWDSFTTNKEHA), 103-142 (MPCTWVMACAYAPSGCAIACGGLDNKCSVYPLTFDKNENM), 151-192 (MHTN…QSFH), 194-236 (HGAD…QAFE), 237-276 (THESDVNSVRYYPSGDAFASGSDDATCRLYDLRADREVAI), 278-320 (SKES…RVSI), and 323-352 (GHENRVSTLRVSPDGTAFCSGSWDHTLRVW).

Belongs to the WD repeat G protein beta family. In terms of assembly, component of a complex composed of RGS9 (isoform RGS9-1), GNB5 and RGS9BP; within this complex, the presence of GNB5 stabilizes both itself and RGS9 and increases RGS9 GTPase-activating protein (GAP) activity. Interacts with RGS7, forming the RGS7-GNB5 complex; within this complex, the presence of GNB5 increases RGS7 GTPase-activating protein (GAP) activity. Interacts with GPR158; promotes the GTPase activator activity of the RGS7-GNB5 complex in absence of glycine, in contrast GTPase activator activity of the RGS7-GNB5 complex is inhibited in presence of glycine. Interacts with RGS6. In terms of tissue distribution, detected in brain.

It is found in the membrane. Functionally, enhances GTPase-activating protein (GAP) activity of regulator of G protein signaling (RGS) proteins, such as RGS7 and RGS9, hence involved in the termination of the signaling initiated by the G protein coupled receptors (GPCRs) by accelerating the GTP hydrolysis on the G-alpha subunits, thereby promoting their inactivation. Increases RGS7 GTPase-activating protein (GAP) activity, thereby regulating mood and cognition. Increases RGS9 GTPase-activating protein (GAP) activity, hence contributes to the deactivation of G protein signaling initiated by D(2) dopamine receptors. May play an important role in neuronal signaling, including in the parasympathetic, but not sympathetic, control of heart rate. The chain is Guanine nucleotide-binding protein subunit beta-5 (Gnb5) from Rattus norvegicus (Rat).